The sequence spans 247 residues: Exosome complex component Rrp4 (247 aa).

The region spanning Asp-75–Lys-148 is the S1 motif domain. Residues Thr-154 to Ala-220 enclose the KH domain.

Belongs to the RRP4 family. Component of the archaeal exosome complex. Forms a trimer of Rrp4 and/or Csl4 subunits. The trimer associates with a hexameric ring-like arrangement composed of 3 Rrp41-Rrp42 heterodimers.

It localises to the cytoplasm. In terms of biological role, non-catalytic component of the exosome, which is a complex involved in RNA degradation. Increases the RNA binding and the efficiency of RNA degradation. Confers strong poly(A) specificity to the exosome. In Thermosphaera aggregans (strain DSM 11486 / M11TL), this protein is Exosome complex component Rrp4.